Reading from the N-terminus, the 558-residue chain is CTP synthase (558 aa).

The interval 1–267 (MAKFVFVTGG…CLEMLDVLNL (267 aa)) is amidoligase domain. S13 lines the CTP pocket. A UTP-binding site is contributed by S13. Residues 14-19 (SIGKGI) and D71 contribute to the ATP site. Residues D71 and E141 each coordinate Mg(2+). CTP-binding positions include 148-150 (DIE), 188-193 (KTKPTQ), and K224. Residues 188–193 (KTKPTQ) and K224 each bind UTP. Positions 292–534 (KVALVGKYVQ…IEAAQLRLPA (243 aa)) constitute a Glutamine amidotransferase type-1 domain. L-glutamine is bound at residue G354. C381 (nucleophile; for glutamine hydrolysis) is an active-site residue. Residues 382–385 (LGMQ), E405, and R462 each bind L-glutamine. Residues H507 and E509 contribute to the active site. The tract at residues 536–558 (PDEALRRQSQTNISAQEKPSRIG) is disordered. The segment covering 542–552 (RQSQTNISAQE) has biased composition (polar residues).

The protein belongs to the CTP synthase family. As to quaternary structure, homotetramer.

It catalyses the reaction UTP + L-glutamine + ATP + H2O = CTP + L-glutamate + ADP + phosphate + 2 H(+). The catalysed reaction is L-glutamine + H2O = L-glutamate + NH4(+). The enzyme catalyses UTP + NH4(+) + ATP = CTP + ADP + phosphate + 2 H(+). Its pathway is pyrimidine metabolism; CTP biosynthesis via de novo pathway; CTP from UDP: step 2/2. Its activity is regulated as follows. Allosterically activated by GTP, when glutamine is the substrate; GTP has no effect on the reaction when ammonia is the substrate. The allosteric effector GTP functions by stabilizing the protein conformation that binds the tetrahedral intermediate(s) formed during glutamine hydrolysis. Inhibited by the product CTP, via allosteric rather than competitive inhibition. Catalyzes the ATP-dependent amination of UTP to CTP with either L-glutamine or ammonia as the source of nitrogen. Regulates intracellular CTP levels through interactions with the four ribonucleotide triphosphates. The chain is CTP synthase from Prochlorococcus marinus (strain MIT 9303).